A 444-amino-acid chain; its full sequence is Methylenetetrahydrofolate--tRNA-(uracil-5-)-methyltransferase TrmFO (444 aa).

10-15 contacts FAD; that stretch reads GAGLAG.

This sequence belongs to the MnmG family. TrmFO subfamily. FAD serves as cofactor.

The protein localises to the cytoplasm. The enzyme catalyses uridine(54) in tRNA + (6R)-5,10-methylene-5,6,7,8-tetrahydrofolate + NADH + H(+) = 5-methyluridine(54) in tRNA + (6S)-5,6,7,8-tetrahydrofolate + NAD(+). It catalyses the reaction uridine(54) in tRNA + (6R)-5,10-methylene-5,6,7,8-tetrahydrofolate + NADPH + H(+) = 5-methyluridine(54) in tRNA + (6S)-5,6,7,8-tetrahydrofolate + NADP(+). Its function is as follows. Catalyzes the folate-dependent formation of 5-methyl-uridine at position 54 (M-5-U54) in all tRNAs. In Streptococcus sanguinis (strain SK36), this protein is Methylenetetrahydrofolate--tRNA-(uracil-5-)-methyltransferase TrmFO.